A 369-amino-acid polypeptide reads, in one-letter code: Phospho-N-acetylmuramoyl-pentapeptide-transferase (369 aa).

Helical transmembrane passes span 3 to 23 (ALLFAGAFSLAFTLFLTPLFI), 53 to 73 (GGIVIILASVLGYFVGHLLTW), 81 to 101 (VTPSGLLVVFMMVGLGFVGFL), 118 to 138 (WQKIAGQVVVATVFAVLAITL), 162 to 182 (FMALGAVIGTGLFIVWICLIV), 198 to 218 (LAAGASIFSIGSYVIIGFWQF), 240 to 260 (PLDLAIIAASIVGALIGFLWW), 267 to 287 (IFMGDTGSLGLGGALAALAIL), 290 to 310 (TELLLVFIGGLFVIVAGSVVL), and 347 to 367 (FWIIAGLLVAAGVGTFYLEWI).

The protein belongs to the glycosyltransferase 4 family. MraY subfamily. Requires Mg(2+) as cofactor.

It localises to the cell membrane. The enzyme catalyses UDP-N-acetyl-alpha-D-muramoyl-L-alanyl-gamma-D-glutamyl-meso-2,6-diaminopimeloyl-D-alanyl-D-alanine + di-trans,octa-cis-undecaprenyl phosphate = di-trans,octa-cis-undecaprenyl diphospho-N-acetyl-alpha-D-muramoyl-L-alanyl-D-glutamyl-meso-2,6-diaminopimeloyl-D-alanyl-D-alanine + UMP. It functions in the pathway cell wall biogenesis; peptidoglycan biosynthesis. In terms of biological role, catalyzes the initial step of the lipid cycle reactions in the biosynthesis of the cell wall peptidoglycan: transfers peptidoglycan precursor phospho-MurNAc-pentapeptide from UDP-MurNAc-pentapeptide onto the lipid carrier undecaprenyl phosphate, yielding undecaprenyl-pyrophosphoryl-MurNAc-pentapeptide, known as lipid I. In Clavibacter michiganensis subsp. michiganensis (strain NCPPB 382), this protein is Phospho-N-acetylmuramoyl-pentapeptide-transferase.